A 415-amino-acid chain; its full sequence is Trehalose synthase (415 aa).

It belongs to the glycosyltransferase group 1 family. Glycosyltransferase 4 subfamily. As to quaternary structure, homodimer. The cofactor is Mg(2+).

It carries out the reaction an NDP-alpha-D-glucose + D-glucose = alpha,alpha-trehalose + a ribonucleoside 5'-diphosphate + H(+). Functionally, synthesizes trehalose from ADP-, UDP- or GDP-glucose and glucose. The polypeptide is Trehalose synthase (Pyrococcus horikoshii (strain ATCC 700860 / DSM 12428 / JCM 9974 / NBRC 100139 / OT-3)).